Consider the following 132-residue polypeptide: Actin-related protein 2/3 complex subunit 5A (132 aa).

The residue at position 2 (alanine 2) is an N-acetylalanine.

Belongs to the ARPC5 family. As to quaternary structure, component of the Arp2/3 complex composed of ARP2, ARP3, ARPC1/p41-ARC, ARPC2/p34-ARC, ARPC3/p21-ARC, ARPC4/p20-ARC and ARPC5/p16-ARC. In terms of tissue distribution, expressed at low levels in all tissues with a relatively highest expression in inflorescences.

The protein resides in the cytoplasm. The protein localises to the cytoskeleton. It is found in the cell projection. In terms of biological role, functions as a component of the Arp2/3 complex which is involved in regulation of actin polymerization and together with an activating nucleation-promoting factor (NPF) mediates the formation of branched actin networks. Arp2/3 complex plays a critical role in the control of cell morphogenesis via the modulation of cell polarity development. The chain is Actin-related protein 2/3 complex subunit 5A (ARPC5A) from Arabidopsis thaliana (Mouse-ear cress).